The following is a 273-amino-acid chain: Cell division protein ZipA (273 aa).

Position 1 (methionine 1) is a topological domain, periplasmic. Residues 2 to 22 traverse the membrane as a helical segment; it reads EFGLREWLIVIGIIVIAGILF. Topologically, residues 23-273 are cytoplasmic; sequence DGWRRMRGGK…FERRQLTQKR (251 aa). A disordered region spans residues 65–125; sequence EMEPQLDEDD…QEPKKSAKLS (61 aa). Positions 111–120 are enriched in basic and acidic residues; sequence VDDKPQEPKK.

It belongs to the ZipA family. Interacts with FtsZ via their C-terminal domains.

The protein resides in the cell inner membrane. Essential cell division protein that stabilizes the FtsZ protofilaments by cross-linking them and that serves as a cytoplasmic membrane anchor for the Z ring. Also required for the recruitment to the septal ring of downstream cell division proteins. This Ectopseudomonas mendocina (strain ymp) (Pseudomonas mendocina) protein is Cell division protein ZipA.